The chain runs to 385 residues: 3-hydroxyisobutyryl-CoA hydrolase, mitochondrial (385 aa).

Substrate is bound by residues glutamate 120, glycine 145, glutamate 168, and aspartate 176.

Belongs to the enoyl-CoA hydratase/isomerase family.

Its subcellular location is the mitochondrion. It carries out the reaction 3-hydroxy-2-methylpropanoyl-CoA + H2O = 3-hydroxy-2-methylpropanoate + CoA + H(+). The protein operates within amino-acid degradation; L-valine degradation. Functionally, hydrolyzes 3-hydroxyisobutyryl-CoA (HIBYL-CoA), a saline catabolite. Has high activity toward isobutyryl-CoA. Could be an isobutyryl-CoA dehydrogenase that functions in valine catabolism. Also hydrolyzes 3-hydroxypropanoyl-CoA. The sequence is that of 3-hydroxyisobutyryl-CoA hydrolase, mitochondrial (hibch) from Xenopus tropicalis (Western clawed frog).